A 367-amino-acid chain; its full sequence is Protein TlpB (367 aa).

5 consecutive transmembrane segments (helical) span residues 15-35, 53-73, 83-103, 124-144, and 153-173; these read ILIS…SPYF, IIAP…GILI, IIPI…YVTF, IQAI…FFLL, and FYVV…LAPI.

The protein resides in the membrane. The polypeptide is Protein TlpB (tlpB) (Flavobacterium psychrophilum).